The primary structure comprises 420 residues: ATP phosphoribosyltransferase regulatory subunit (420 aa).

It belongs to the class-II aminoacyl-tRNA synthetase family. HisZ subfamily. As to quaternary structure, heteromultimer composed of HisG and HisZ subunits.

It is found in the cytoplasm. The protein operates within amino-acid biosynthesis; L-histidine biosynthesis; L-histidine from 5-phospho-alpha-D-ribose 1-diphosphate: step 1/9. Its function is as follows. Required for the first step of histidine biosynthesis. May allow the feedback regulation of ATP phosphoribosyltransferase activity by histidine. In Synechococcus sp. (strain ATCC 27144 / PCC 6301 / SAUG 1402/1) (Anacystis nidulans), this protein is ATP phosphoribosyltransferase regulatory subunit.